A 208-amino-acid chain; its full sequence is N-(5'-phosphoribosyl)anthranilate isomerase (208 aa).

It belongs to the TrpF family.

The enzyme catalyses N-(5-phospho-beta-D-ribosyl)anthranilate = 1-(2-carboxyphenylamino)-1-deoxy-D-ribulose 5-phosphate. Its pathway is amino-acid biosynthesis; L-tryptophan biosynthesis; L-tryptophan from chorismate: step 3/5. This Methanococcus vannielii (strain ATCC 35089 / DSM 1224 / JCM 13029 / OCM 148 / SB) protein is N-(5'-phosphoribosyl)anthranilate isomerase.